Consider the following 206-residue polypeptide: Large ribosomal subunit protein uL4 (206 aa).

Residues Met63–Glu97 are disordered. Over residues Tyr64–Ala77 the composition is skewed to basic residues.

The protein belongs to the universal ribosomal protein uL4 family. In terms of assembly, part of the 50S ribosomal subunit.

Its function is as follows. One of the primary rRNA binding proteins, this protein initially binds near the 5'-end of the 23S rRNA. It is important during the early stages of 50S assembly. It makes multiple contacts with different domains of the 23S rRNA in the assembled 50S subunit and ribosome. Functionally, forms part of the polypeptide exit tunnel. The protein is Large ribosomal subunit protein uL4 of Rhizobium etli (strain ATCC 51251 / DSM 11541 / JCM 21823 / NBRC 15573 / CFN 42).